The chain runs to 679 residues: Methionine--tRNA ligase (679 aa).

The 'HIGH' region motif lies at 14 to 24; it reads PYANGSIHLGH. Positions 145, 148, 158, and 161 each coordinate Zn(2+). Residues 331 to 335 carry the 'KMSKS' region motif; the sequence is KMSKS. Lysine 334 is an ATP binding site. Residues 577–679 enclose the tRNA-binding domain; it reads TFAAVDLRIA…NGAKPGQRVM (103 aa).

The protein belongs to the class-I aminoacyl-tRNA synthetase family. MetG type 1 subfamily. In terms of assembly, homodimer. Zn(2+) is required as a cofactor.

It localises to the cytoplasm. The enzyme catalyses tRNA(Met) + L-methionine + ATP = L-methionyl-tRNA(Met) + AMP + diphosphate. Is required not only for elongation of protein synthesis but also for the initiation of all mRNA translation through initiator tRNA(fMet) aminoacylation. This Stutzerimonas stutzeri (strain A1501) (Pseudomonas stutzeri) protein is Methionine--tRNA ligase.